Consider the following 404-residue polypeptide: Iron-sulfur assembly protein IscA2 (404 aa).

Residues 244-289 (KEEDEKKLDKLLKKRNIKKRDIVTITEEAKEELKKIISINKKENNN) adopt a coiled-coil conformation.

Belongs to the HesB/IscA family. As to quaternary structure, dimer. Homotetramer. Interacts with ABCB6.

The protein localises to the mitochondrion. The protein operates within cofactor biosynthesis; iron-sulfur cluster biosynthesis. Functionally, participates in iron-sulfur cluster formation (ISC) pathway for iron-sulfur (Fe-S) cluster biogenesis. Can bind and transfer [4Fe-4S] clusters to target apo-proteins. In Plasmodium falciparum (isolate 3D7), this protein is Iron-sulfur assembly protein IscA2.